A 153-amino-acid polypeptide reads, in one-letter code: Guanyl-specific ribonuclease N1 (153 aa).

The first 20 residues, 1–20 (MVQLLSAFVSLLSVVAVSGA), serve as a signal peptide directing secretion. Positions 21–49 (AIPAPAPEAVVDVAPETATIEPTGNFTAQ) are excised as a propeptide. 2 cysteine pairs are disulfide-bonded: cysteine 51–cysteine 59 and cysteine 55–cysteine 152. The active site involves histidine 89. Glutamate 107 functions as the Proton acceptor in the catalytic mechanism. Histidine 141 serves as the catalytic Proton donor.

This sequence belongs to the ribonuclease N1/T1 family.

The enzyme catalyses [RNA] containing guanosine + H2O = an [RNA fragment]-3'-guanosine-3'-phosphate + a 5'-hydroxy-ribonucleotide-3'-[RNA fragment].. The protein is Guanyl-specific ribonuclease N1 (grn) of Neurospora crassa (strain ATCC 24698 / 74-OR23-1A / CBS 708.71 / DSM 1257 / FGSC 987).